A 274-amino-acid chain; its full sequence is Thiamine kinase (274 aa).

The protein belongs to the thiamine kinase family.

The catalysed reaction is thiamine + ATP = thiamine phosphate + ADP + H(+). It functions in the pathway cofactor biosynthesis; thiamine diphosphate biosynthesis; thiamine phosphate from thiamine: step 1/1. Catalyzes the ATP-dependent phosphorylation of thiamine to thiamine phosphate. Is involved in thiamine salvage. This is Thiamine kinase from Escherichia coli O157:H7 (strain EC4115 / EHEC).